Consider the following 202-residue polypeptide: Oocyte-secreted protein 1 (202 aa).

An N-terminal signal peptide occupies residues M1–A21. Residues Q157–A183 are disordered.

This sequence belongs to the PLAC1 family. In terms of tissue distribution, expressed in oocytes in primary through antral-stage follicles. Expressed in liver and ovary.

Its subcellular location is the secreted. Its function is as follows. May be involved in cell differentiation. The polypeptide is Oocyte-secreted protein 1 (Oosp1) (Mus musculus (Mouse)).